The sequence spans 247 residues: TM2 domain-containing protein 3 (247 aa).

Residues 1–30 form the signal peptide; that stretch reads MDLMMALKRVCRVLLFVTQMYVFSGRGSLS. Residues 31 to 179 lie on the Extracellular side of the membrane; sequence FEYSQPVAQP…RTFPKMLYCN (149 aa). Asn-87, Asn-99, Asn-139, Asn-155, Asn-169, and Asn-179 each carry an N-linked (GlcNAc...) asparagine glycan. Residues 180–200 traverse the membrane as a helical segment; it reads WTGGYKWSTALALSITLGGFG. In terms of domain architecture, TM2 spans 183–231; that stretch reads GYKWSTALALSITLGGFGADRFYLGQWREGLGKLFSFGGLGIWTLIDVF. The Cytoplasmic portion of the chain corresponds to 201–215; sequence ADRFYLGQWREGLGK. The helical transmembrane segment at 216 to 236 threads the bilayer; it reads LFSFGGLGIWTLIDVFLISVG. At 237-247 the chain is on the extracellular side; sequence YVGPADGSLYI.

This sequence belongs to the TM2 family.

The protein resides in the membrane. The sequence is that of TM2 domain-containing protein 3 (tm2d3) from Xenopus laevis (African clawed frog).